The sequence spans 83 residues: Neurotoxin 3FTx-RI (83 aa).

Residues 1-21 (MKTLLLTLVVLTIVCLDLGHT) form the signal peptide. Cystine bridges form between cysteine 24–cysteine 45, cysteine 38–cysteine 62, cysteine 64–cysteine 75, and cysteine 76–cysteine 81.

This sequence belongs to the three-finger toxin family. Short-chain subfamily. Type I alpha-neurotoxin sub-subfamily. In terms of tissue distribution, expressed by the venom gland.

Its subcellular location is the secreted. Its function is as follows. Binds to muscle nicotinic acetylcholine receptor (nAChR) and inhibit acetylcholine from binding to the receptor, thereby impairing neuromuscular transmission. This Bungarus fasciatus (Banded krait) protein is Neurotoxin 3FTx-RI.